A 505-amino-acid polypeptide reads, in one-letter code: Cysteine--tRNA ligase (505 aa).

Cys-33 contacts Zn(2+). Residues 35–45 carry the 'HIGH' region motif; sequence PTVYDFAHIGN. Positions 229, 268, and 272 each coordinate Zn(2+). The 'KMSKS' region signature appears at 301–305; sequence KMSKS. Lys-304 is a binding site for ATP.

Belongs to the class-I aminoacyl-tRNA synthetase family. Monomer. Zn(2+) serves as cofactor.

The protein resides in the cytoplasm. It carries out the reaction tRNA(Cys) + L-cysteine + ATP = L-cysteinyl-tRNA(Cys) + AMP + diphosphate. The sequence is that of Cysteine--tRNA ligase from Brucella anthropi (strain ATCC 49188 / DSM 6882 / CCUG 24695 / JCM 21032 / LMG 3331 / NBRC 15819 / NCTC 12168 / Alc 37) (Ochrobactrum anthropi).